The following is a 384-amino-acid chain: Aurora kinase (384 aa).

Polar residues-rich tracts occupy residues 1-12 and 19-29; these read MSYPNNKENSNN and SVPSKQPQRVL. The interval 1 to 100 is disordered; that stretch reads MSYPNNKENS…SSSSSSSQSV (100 aa). A compositionally biased stretch (low complexity) spans 30–99; the sequence is QQQNTNINNH…SSSSSSSSQS (70 aa). The Protein kinase domain occupies 110–360; it reads FDIGKLLGMG…LKDVINHPWI (251 aa). ATP-binding positions include 116 to 124 and K139; that span reads LGMGRFGHV. The Proton acceptor role is filled by D233.

The protein belongs to the protein kinase superfamily. Ser/Thr protein kinase family. Aurora subfamily. In terms of assembly, interacts with icpA. Forms a complex at the central spindle.

It is found in the cytoplasm. The protein localises to the chromosome. The protein resides in the centromere. Its subcellular location is the cytoskeleton. It localises to the spindle pole. It is found in the cleavage furrow. The protein localises to the cell projection. The protein resides in the neuron projection. It catalyses the reaction L-seryl-[protein] + ATP = O-phospho-L-seryl-[protein] + ADP + H(+). The enzyme catalyses L-threonyl-[protein] + ATP = O-phospho-L-threonyl-[protein] + ADP + H(+). Its function is as follows. Part of a chromosomal passenger complex. The sequence is that of Aurora kinase (aurK) from Dictyostelium discoideum (Social amoeba).